The following is a 430-amino-acid chain: Trigger factor (430 aa).

The PPIase FKBP-type domain maps to 157 to 242 (GDLVALETWS…AVEVSEPVLP (86 aa)).

It belongs to the FKBP-type PPIase family. Tig subfamily.

It is found in the cytoplasm. It carries out the reaction [protein]-peptidylproline (omega=180) = [protein]-peptidylproline (omega=0). Functionally, involved in protein export. Acts as a chaperone by maintaining the newly synthesized protein in an open conformation. Functions as a peptidyl-prolyl cis-trans isomerase. The protein is Trigger factor of Xanthomonas oryzae pv. oryzae (strain MAFF 311018).